The sequence spans 1822 residues: ADP-ribosylation factor guanine nucleotide-exchange factor sec72 (1822 aa).

2 disordered regions span residues 1–54 and 66–126; these read MQDA…NGMD and DAVV…RASL. Residue Ser-44 is modified to Phosphoserine. Residues 72-84 show a composition bias toward polar residues; that stretch reads DINTEDSSLSPAK. Residues 85–110 are compositionally biased toward basic and acidic residues; that stretch reads QENEKSPEGIEQKYQEEDLKDDKKSN. Residues Ser-122 and Ser-125 each carry the phosphoserine modification. The short motif at 547–551 is the HUS box element; the sequence is NYDCD. Thr-597 bears the Phosphothreonine mark. Ser-653 carries the phosphoserine modification. At Thr-654 the chain carries Phosphothreonine. Residue Ser-669 is modified to Phosphoserine. An SEC7 domain is found at 701-889; sequence QFESNKQRKK…GFVYDDILKN (189 aa). The tract at residues 898–1106 is HDS1 domain; the sequence is ELAAIAPLMN…NARVRRKNVN (209 aa). Ser-1110 is subject to Phosphoserine. Disordered regions lie at residues 1111-1131 and 1584-1610; these read NSIRHVSGSTSRSTRTRSLSK and ENENTQLSHKRGGSLPETSRSISTSSI. Low complexity-rich tracts occupy residues 1117–1130 and 1597–1610; these read SGSTSRSTRTRSLS and SLPETSRSISTSSI. Phosphoserine occurs at positions 1606 and 1609.

Its subcellular location is the cytoplasm. It localises to the golgi apparatus. It is found in the trans-Golgi network. The protein resides in the cytoplasmic vesicle. The protein localises to the COPI-coated vesicle membrane. Its subcellular location is the COPII-coated vesicle membrane. Functionally, guanine exchange factor that acts as an activator of arf1 at the trans-Golgi net-work and is thus involved in vesicular budding and traffic between compartments of the Golgi apparatus. Activation of Arf (ADP-ribosylation factor) GTPases is essential for vesicle formation via recruitment of cargo adapters and coat proteins necessary for Golgi trafficking. Involved in the resistance to tamoxifen (TAM), an anticancer drug used to treat estrogen receptor (ER)-positive breast cancer. This chain is ADP-ribosylation factor guanine nucleotide-exchange factor sec72, found in Schizosaccharomyces pombe (strain 972 / ATCC 24843) (Fission yeast).